The chain runs to 205 residues: Holliday junction branch migration complex subunit RuvA (205 aa).

The interval 1-64 (MIGRLSGILV…EDAQLLYGFI (64 aa)) is domain I. The segment at 65-143 (TKQERALFRL…SLLEASAGSE (79 aa)) is domain II. The segment at 144–156 (REFMLQSNYTPAA) is flexible linker. Residues 157 to 205 (AVDSAEEDAISALLSLGYKPAQASKSVSAAFKEGMSSETLIKAALKSML) are domain III.

This sequence belongs to the RuvA family. As to quaternary structure, homotetramer. Forms an RuvA(8)-RuvB(12)-Holliday junction (HJ) complex. HJ DNA is sandwiched between 2 RuvA tetramers; dsDNA enters through RuvA and exits via RuvB. An RuvB hexamer assembles on each DNA strand where it exits the tetramer. Each RuvB hexamer is contacted by two RuvA subunits (via domain III) on 2 adjacent RuvB subunits; this complex drives branch migration. In the full resolvosome a probable DNA-RuvA(4)-RuvB(12)-RuvC(2) complex forms which resolves the HJ.

Its subcellular location is the cytoplasm. Functionally, the RuvA-RuvB-RuvC complex processes Holliday junction (HJ) DNA during genetic recombination and DNA repair, while the RuvA-RuvB complex plays an important role in the rescue of blocked DNA replication forks via replication fork reversal (RFR). RuvA specifically binds to HJ cruciform DNA, conferring on it an open structure. The RuvB hexamer acts as an ATP-dependent pump, pulling dsDNA into and through the RuvAB complex. HJ branch migration allows RuvC to scan DNA until it finds its consensus sequence, where it cleaves and resolves the cruciform DNA. The protein is Holliday junction branch migration complex subunit RuvA of Shewanella frigidimarina (strain NCIMB 400).